The sequence spans 55 residues: Large ribosomal subunit protein bL33 (55 aa).

Belongs to the bacterial ribosomal protein bL33 family.

The protein is Large ribosomal subunit protein bL33 of Ruegeria pomeroyi (strain ATCC 700808 / DSM 15171 / DSS-3) (Silicibacter pomeroyi).